Reading from the N-terminus, the 342-residue chain is Probable deoxyhypusine synthase (342 aa).

The active-site Nucleophile is the lysine 307.

Belongs to the deoxyhypusine synthase family. NAD(+) is required as a cofactor.

It catalyses the reaction [eIF5A protein]-L-lysine + spermidine = [eIF5A protein]-deoxyhypusine + propane-1,3-diamine. The protein operates within protein modification; eIF5A hypusination. In terms of biological role, catalyzes the NAD-dependent oxidative cleavage of spermidine and the subsequent transfer of the butylamine moiety of spermidine to the epsilon-amino group of a specific lysine residue of the eIF-5A precursor protein to form the intermediate deoxyhypusine residue. The protein is Probable deoxyhypusine synthase (dys) of Pyrococcus horikoshii (strain ATCC 700860 / DSM 12428 / JCM 9974 / NBRC 100139 / OT-3).